The following is a 219-amino-acid chain: Thymidylate kinase (219 aa).

Residue 10–17 participates in ATP binding; it reads GLEGAGKT.

The protein belongs to the thymidylate kinase family.

It carries out the reaction dTMP + ATP = dTDP + ADP. Functionally, phosphorylation of dTMP to form dTDP in both de novo and salvage pathways of dTTP synthesis. The protein is Thymidylate kinase of Pectobacterium carotovorum subsp. carotovorum (strain PC1).